The primary structure comprises 697 residues: uncharacterized protein (697 aa).

14 helical membrane passes run 65–85 (PVRNFIEEGCDGVTDLYVGIY), 106–126 (CTFRTNNVKLGYLIVDELHNF), 131–151 (YRQSQFGGITNLDFDAFEKAI), 163–183 (DAALQRIGLTGLAKKSMDINE), 194–214 (LSSYPTRMFNLIKEKSKVPLG), 227–247 (TSATTTASINVRTSATTTASI), 286–306 (STNATTTESTNASAKEDANKD), 316–336 (PVTDINKEPYKRKGSQMVLLE), 361–381 (SDEIKHLFLYGIDIYFCPEGV), 394–414 (MFELCVCWAGQKVSYRRMAWE), 419–439 (ERMLRNDEEYKEYLEDIEPYH), 450–470 (SVKRREIYSQIQRNYAWYLAI), 487–507 (QGSQVFRMSGRQIKELYYKVW), and 558–578 (TSAGLQGPQYVKLQFSRHHRQ). A disordered region spans residues 246–321 (SINVRTSATT…NRFHPVTDIN (76 aa)). A compositionally biased stretch (low complexity) spans 251–298 (TSATTTESTNSNTNATTTESTNSSTNATTTASTNSSTNATTTESTNAS). Residues 299-321 (AKEDANKDGNAEDNRFHPVTDIN) are compositionally biased toward basic and acidic residues.

It is found in the membrane. This is an uncharacterized protein from Saccharomyces cerevisiae (strain ATCC 204508 / S288c) (Baker's yeast).